Here is an 806-residue protein sequence, read N- to C-terminus: Leucine--tRNA ligase (806 aa).

Positions 38–48 (PYPSGEIHMGH) match the 'HIGH' region motif. Residues 572-576 (KMSKS) carry the 'KMSKS' region motif. An ATP-binding site is contributed by K575.

It belongs to the class-I aminoacyl-tRNA synthetase family.

It is found in the cytoplasm. The enzyme catalyses tRNA(Leu) + L-leucine + ATP = L-leucyl-tRNA(Leu) + AMP + diphosphate. The sequence is that of Leucine--tRNA ligase from Helicobacter pylori (strain ATCC 700392 / 26695) (Campylobacter pylori).